The primary structure comprises 62 residues: Cecropin-D (62 aa).

The signal sequence occupies residues methionine 1–alanine 22. A propeptide spans alanine 23 to proline 24 (removed by a dipeptidylpeptidase). Residue lysine 60 is modified to Lysine amide.

This sequence belongs to the cecropin family.

It is found in the secreted. Cecropins have lytic and antibacterial activity against several Gram-positive and Gram-negative bacteria. This Hyalophora cecropia (Cecropia moth) protein is Cecropin-D.